The primary structure comprises 186 residues: GTP cyclohydrolase 1 1 (186 aa).

This sequence belongs to the GTP cyclohydrolase I family. In terms of assembly, homomer.

The enzyme catalyses GTP + H2O = 7,8-dihydroneopterin 3'-triphosphate + formate + H(+). The protein operates within cofactor biosynthesis; 7,8-dihydroneopterin triphosphate biosynthesis; 7,8-dihydroneopterin triphosphate from GTP: step 1/1. The chain is GTP cyclohydrolase 1 1 (folE1) from Pseudomonas aeruginosa (strain ATCC 15692 / DSM 22644 / CIP 104116 / JCM 14847 / LMG 12228 / 1C / PRS 101 / PAO1).